A 114-amino-acid chain; its full sequence is Phosphoribosyl-AMP cyclohydrolase (114 aa).

Residue aspartate 76 coordinates Mg(2+). Cysteine 77 contributes to the Zn(2+) binding site. Mg(2+) is bound by residues aspartate 78 and aspartate 80. Positions 93 and 100 each coordinate Zn(2+).

Belongs to the PRA-CH family. In terms of assembly, homodimer. Mg(2+) serves as cofactor. Zn(2+) is required as a cofactor.

It is found in the cytoplasm. It catalyses the reaction 1-(5-phospho-beta-D-ribosyl)-5'-AMP + H2O = 1-(5-phospho-beta-D-ribosyl)-5-[(5-phospho-beta-D-ribosylamino)methylideneamino]imidazole-4-carboxamide. It participates in amino-acid biosynthesis; L-histidine biosynthesis; L-histidine from 5-phospho-alpha-D-ribose 1-diphosphate: step 3/9. Its function is as follows. Catalyzes the hydrolysis of the adenine ring of phosphoribosyl-AMP. The sequence is that of Phosphoribosyl-AMP cyclohydrolase from Streptococcus sanguinis (strain SK36).